A 162-amino-acid polypeptide reads, in one-letter code: 2-C-methyl-D-erythritol 2,4-cyclodiphosphate synthase (162 aa).

2 residues coordinate a divalent metal cation: Asp8 and His10. Residues 8–10 (DVH) and 36–37 (HS) each bind 4-CDP-2-C-methyl-D-erythritol 2-phosphate. Residue His44 coordinates a divalent metal cation. Residues 58 to 60 (DIG), 63 to 67 (FPDTD), 102 to 108 (AQAPKMA), 134 to 137 (TTTE), Phe141, and Arg144 each bind 4-CDP-2-C-methyl-D-erythritol 2-phosphate.

This sequence belongs to the IspF family. As to quaternary structure, homotrimer. It depends on a divalent metal cation as a cofactor.

It carries out the reaction 4-CDP-2-C-methyl-D-erythritol 2-phosphate = 2-C-methyl-D-erythritol 2,4-cyclic diphosphate + CMP. It participates in isoprenoid biosynthesis; isopentenyl diphosphate biosynthesis via DXP pathway; isopentenyl diphosphate from 1-deoxy-D-xylulose 5-phosphate: step 4/6. Its function is as follows. Involved in the biosynthesis of isopentenyl diphosphate (IPP) and dimethylallyl diphosphate (DMAPP), two major building blocks of isoprenoid compounds. Catalyzes the conversion of 4-diphosphocytidyl-2-C-methyl-D-erythritol 2-phosphate (CDP-ME2P) to 2-C-methyl-D-erythritol 2,4-cyclodiphosphate (ME-CPP) with a corresponding release of cytidine 5-monophosphate (CMP). This is 2-C-methyl-D-erythritol 2,4-cyclodiphosphate synthase from Yersinia pseudotuberculosis serotype IB (strain PB1/+).